Reading from the N-terminus, the 592-residue chain is Tetrathionate sensor histidine kinase TtrS (592 aa).

The next 2 membrane-spanning stretches (helical) occupy residues 11–31 and 307–327; these read VLAA…NIGI and VGGV…VMLL. Positions 364–581 constitute a Histidine kinase domain; the sequence is GFAHELNQPL…VVTIHFLHEN (218 aa). His-367 is modified (phosphohistidine; by autocatalysis).

Post-translationally, autophosphorylated.

Its subcellular location is the cell inner membrane. The catalysed reaction is ATP + protein L-histidine = ADP + protein N-phospho-L-histidine.. Its function is as follows. Member of the two-component regulatory system TtrR/TtrS, which is required for synthesis of tetrathionate reductase. Probably functions as a sensor protein kinase which is autophosphorylated at a histidine residue in response to tetrathionate, and transfers its phosphate group to TtrR. During mice infection, the ability to use tetrathionate as an electron acceptor is a growth advantage for S.typhimurium over the competing microbiota in the lumen of the inflamed gut. This Salmonella typhimurium (strain LT2 / SGSC1412 / ATCC 700720) protein is Tetrathionate sensor histidine kinase TtrS (ttrS).